The sequence spans 292 residues: Shikimate dehydrogenase (NADP(+)) (292 aa).

Shikimate contacts are provided by residues 22–24 and serine 69; that span reads SLS. Lysine 73 acts as the Proton acceptor in catalysis. Shikimate-binding residues include asparagine 94 and aspartate 111. Residues 135–139 and isoleucine 236 each bind NADP(+); that span reads GVGGA. Tyrosine 238 serves as a coordination point for shikimate. Glycine 260 lines the NADP(+) pocket.

It belongs to the shikimate dehydrogenase family. Homodimer.

The enzyme catalyses shikimate + NADP(+) = 3-dehydroshikimate + NADPH + H(+). It participates in metabolic intermediate biosynthesis; chorismate biosynthesis; chorismate from D-erythrose 4-phosphate and phosphoenolpyruvate: step 4/7. Functionally, involved in the biosynthesis of the chorismate, which leads to the biosynthesis of aromatic amino acids. Catalyzes the reversible NADPH linked reduction of 3-dehydroshikimate (DHSA) to yield shikimate (SA). The protein is Shikimate dehydrogenase (NADP(+)) of Streptococcus pyogenes serotype M3 (strain ATCC BAA-595 / MGAS315).